A 174-amino-acid polypeptide reads, in one-letter code: NADH-ubiquinone oxidoreductase chain 6 (174 aa).

A run of 5 helical transmembrane segments spans residues 1 to 21 (MTYV…GFSS), 24 to 44 (SPIY…GIVL), 46 to 66 (FGGS…MLVV), 86 to 106 (VMIL…VVYM), and 151 to 171 (WLMV…IEIT).

This sequence belongs to the complex I subunit 6 family. As to quaternary structure, core subunit of respiratory chain NADH dehydrogenase (Complex I) which is composed of 45 different subunits.

The protein resides in the mitochondrion inner membrane. It catalyses the reaction a ubiquinone + NADH + 5 H(+)(in) = a ubiquinol + NAD(+) + 4 H(+)(out). Its function is as follows. Core subunit of the mitochondrial membrane respiratory chain NADH dehydrogenase (Complex I) which catalyzes electron transfer from NADH through the respiratory chain, using ubiquinone as an electron acceptor. Essential for the catalytic activity and assembly of complex I. In Oryctolagus cuniculus (Rabbit), this protein is NADH-ubiquinone oxidoreductase chain 6 (MT-ND6).